The chain runs to 425 residues: Serine--tRNA ligase (425 aa).

Position 230 to 232 (Thr-230 to Glu-232) interacts with L-serine. Arg-261–Glu-263 contributes to the ATP binding site. Glu-284 is an L-serine binding site. Position 348–351 (Glu-348–Ser-351) interacts with ATP. Ser-384 is a binding site for L-serine.

It belongs to the class-II aminoacyl-tRNA synthetase family. Type-1 seryl-tRNA synthetase subfamily. Homodimer. The tRNA molecule binds across the dimer.

The protein localises to the cytoplasm. The enzyme catalyses tRNA(Ser) + L-serine + ATP = L-seryl-tRNA(Ser) + AMP + diphosphate + H(+). The catalysed reaction is tRNA(Sec) + L-serine + ATP = L-seryl-tRNA(Sec) + AMP + diphosphate + H(+). Its pathway is aminoacyl-tRNA biosynthesis; selenocysteinyl-tRNA(Sec) biosynthesis; L-seryl-tRNA(Sec) from L-serine and tRNA(Sec): step 1/1. Its function is as follows. Catalyzes the attachment of serine to tRNA(Ser). Is also able to aminoacylate tRNA(Sec) with serine, to form the misacylated tRNA L-seryl-tRNA(Sec), which will be further converted into selenocysteinyl-tRNA(Sec). The sequence is that of Serine--tRNA ligase from Streptococcus equi subsp. equi (strain 4047).